Reading from the N-terminus, the 310-residue chain is Transcription factor UNE12 (310 aa).

Disordered regions lie at residues 124–156 (HGQP…ATDP) and 229–253 (SSSV…WSND). The region spanning 152 to 201 (QATDPHSIAERLRRERIAERIRALQELVPTVNKTDRAAMIDEIVDYVKFL) is the bHLH domain.

In terms of assembly, homodimer. Expressed constitutively in roots, leaves, stems, and flowers.

The protein localises to the nucleus. Functionally, required for ovule fertilization. This Arabidopsis thaliana (Mouse-ear cress) protein is Transcription factor UNE12 (UNE12).